We begin with the raw amino-acid sequence, 81 residues long: Photosystem I iron-sulfur center (81 aa).

4Fe-4S ferredoxin-type domains follow at residues 2–31 (SHAV…MVPW) and 39–68 (IASS…IRVY). Positions 11, 14, 17, 21, 48, 51, 54, and 58 each coordinate [4Fe-4S] cluster.

As to quaternary structure, the cyanobacterial PSI reaction center is composed of one copy each of PsaA,B,C,D,E,F,I,J,K,L,M and X, and forms trimeric complexes. The cofactor is [4Fe-4S] cluster.

Its subcellular location is the cellular thylakoid membrane. The catalysed reaction is reduced [plastocyanin] + hnu + oxidized [2Fe-2S]-[ferredoxin] = oxidized [plastocyanin] + reduced [2Fe-2S]-[ferredoxin]. Functionally, apoprotein for the two 4Fe-4S centers FA and FB of photosystem I (PSI); essential for photochemical activity. FB is the terminal electron acceptor of PSI, donating electrons to ferredoxin. The C-terminus interacts with PsaA/B/D and helps assemble the protein into the PSI complex. Required for binding of PsaD and PsaE to PSI. PSI is a plastocyanin/cytochrome c6-ferredoxin oxidoreductase, converting photonic excitation into a charge separation, which transfers an electron from the donor P700 chlorophyll pair to the spectroscopically characterized acceptors A0, A1, FX, FA and FB in turn. This chain is Photosystem I iron-sulfur center, found in Prochlorococcus marinus (strain MIT 9211).